A 398-amino-acid polypeptide reads, in one-letter code: Bone morphogenetic protein 2-B (398 aa).

An N-terminal signal peptide occupies residues 1-23; it reads MVAGIHSLLLLQFYQILLSGCTG. A propeptide spanning residues 24 to 284 is cleaved from the precursor; it reads LVPEEGKRKY…GHALHKRQKR (261 aa). N-linked (GlcNAc...) asparagine glycans are attached at residues N137, N202, N237, and N340. Cystine bridges form between C298/C363, C327/C395, and C331/C397.

The protein belongs to the TGF-beta family. Homodimer; disulfide-linked.

The protein localises to the secreted. Functionally, induces cartilage and bone formation. In Xenopus laevis (African clawed frog), this protein is Bone morphogenetic protein 2-B (bmp2-b).